A 258-amino-acid chain; its full sequence is Hydroxyacylglutathione hydrolase (258 aa).

Positions 56, 58, 60, 61, 112, 132, and 170 each coordinate Zn(2+).

Belongs to the metallo-beta-lactamase superfamily. Glyoxalase II family. In terms of assembly, monomer. Zn(2+) serves as cofactor.

It catalyses the reaction an S-(2-hydroxyacyl)glutathione + H2O = a 2-hydroxy carboxylate + glutathione + H(+). The protein operates within secondary metabolite metabolism; methylglyoxal degradation; (R)-lactate from methylglyoxal: step 2/2. Functionally, thiolesterase that catalyzes the hydrolysis of S-D-lactoyl-glutathione to form glutathione and D-lactic acid. The protein is Hydroxyacylglutathione hydrolase of Pseudomonas aeruginosa (strain LESB58).